We begin with the raw amino-acid sequence, 106 residues long: PTS system N,N'-diacetylchitobiose-specific EIIB component (106 aa).

The PTS EIIB type-3 domain occupies 3–106 (KKHIYLFCSA…VAAIKKAAAN (104 aa)). C10 functions as the Phosphocysteine intermediate in the catalytic mechanism. Position 10 is a phosphocysteine; by EIIA (C10).

Forms a complex with ChbA (EIIA). ChbB is a monomer in both its unphosphorylated and phosphorylated forms.

It is found in the cytoplasm. It catalyses the reaction N,N'-diacetylchitobiose(out) + N(pros)-phospho-L-histidyl-[protein] = diacetylchitobiose-6'-phosphate(in) + L-histidyl-[protein]. In terms of biological role, the phosphoenolpyruvate-dependent sugar phosphotransferase system (sugar PTS), a major carbohydrate active transport system, catalyzes the phosphorylation of incoming sugar substrates concomitantly with their translocation across the cell membrane. The enzyme II ChbABC PTS system is involved in the transport of the chitin disaccharide N,N'-diacetylchitobiose (GlcNAc2). The polypeptide is PTS system N,N'-diacetylchitobiose-specific EIIB component (chbB) (Escherichia coli O157:H7).